We begin with the raw amino-acid sequence, 144 residues long: Large ribosomal subunit protein uL15 (144 aa).

The interval 1–54 (MRLNTLSPAEGSKKAGKRLGRGIGSGLGKTGGRGHKGQKSRSGGGVRRGFEGGQ) is disordered. The segment covering 21–31 (RGIGSGLGKTG) has biased composition (gly residues).

Belongs to the universal ribosomal protein uL15 family. As to quaternary structure, part of the 50S ribosomal subunit.

Functionally, binds to the 23S rRNA. This Salmonella enteritidis PT4 (strain P125109) protein is Large ribosomal subunit protein uL15.